The primary structure comprises 334 residues: Glycerol-3-phosphate dehydrogenase [NAD(P)+] (334 aa).

NADPH-binding residues include Ser-14, Tyr-15, His-35, and Lys-109. Residues Lys-109, Gly-138, and Thr-140 each contribute to the sn-glycerol 3-phosphate site. Ala-142 serves as a coordination point for NADPH. Sn-glycerol 3-phosphate-binding residues include Lys-194, Asp-247, Ser-257, Arg-258, and Asn-259. Lys-194 functions as the Proton acceptor in the catalytic mechanism. Arg-258 is an NADPH binding site. 2 residues coordinate NADPH: Val-282 and Glu-284.

This sequence belongs to the NAD-dependent glycerol-3-phosphate dehydrogenase family.

It localises to the cytoplasm. It catalyses the reaction sn-glycerol 3-phosphate + NAD(+) = dihydroxyacetone phosphate + NADH + H(+). It carries out the reaction sn-glycerol 3-phosphate + NADP(+) = dihydroxyacetone phosphate + NADPH + H(+). The protein operates within membrane lipid metabolism; glycerophospholipid metabolism. Catalyzes the reduction of the glycolytic intermediate dihydroxyacetone phosphate (DHAP) to sn-glycerol 3-phosphate (G3P), the key precursor for phospholipid synthesis. The polypeptide is Glycerol-3-phosphate dehydrogenase [NAD(P)+] (Tolumonas auensis (strain DSM 9187 / NBRC 110442 / TA 4)).